The sequence spans 387 residues: Mannitol-1-phosphate 5-dehydrogenase (387 aa).

3–14 serves as a coordination point for NAD(+); the sequence is ALHFGAGNIGRG.

The protein belongs to the mannitol dehydrogenase family.

It carries out the reaction D-mannitol 1-phosphate + NAD(+) = beta-D-fructose 6-phosphate + NADH + H(+). In Yersinia pseudotuberculosis serotype O:3 (strain YPIII), this protein is Mannitol-1-phosphate 5-dehydrogenase.